A 159-amino-acid polypeptide reads, in one-letter code: Methyl-coenzyme M reductase operon protein D (159 aa).

In terms of assembly, MCR is composed of three subunits: alpha, beta, and gamma. The function of proteins C and D is not known.

The chain is Methyl-coenzyme M reductase operon protein D (mcrD) from Methanococcus voltae.